The sequence spans 345 residues: L-threonine 3-dehydrogenase (345 aa).

Cysteine 42 serves as a coordination point for Zn(2+). Residues threonine 44 and histidine 47 each act as charge relay system in the active site. The Zn(2+) site is built by histidine 67, glutamate 68, cysteine 97, cysteine 100, cysteine 103, and cysteine 111. NAD(+) contacts are provided by residues isoleucine 179, aspartate 199, arginine 204, 266–268, and 290–291; these read LGI and IY.

Belongs to the zinc-containing alcohol dehydrogenase family. Homotetramer. It depends on Zn(2+) as a cofactor.

Its subcellular location is the cytoplasm. It carries out the reaction L-threonine + NAD(+) = (2S)-2-amino-3-oxobutanoate + NADH + H(+). It participates in amino-acid degradation; L-threonine degradation via oxydo-reductase pathway; glycine from L-threonine: step 1/2. In terms of biological role, catalyzes the NAD(+)-dependent oxidation of L-threonine to 2-amino-3-ketobutyrate. This is L-threonine 3-dehydrogenase from Rhizobium johnstonii (strain DSM 114642 / LMG 32736 / 3841) (Rhizobium leguminosarum bv. viciae).